The sequence spans 442 residues: Protein translocase subunit SecY (442 aa).

10 helical membrane passes run 24–44 (FLFL…PGIN), 76–96 (IFAL…LMTA), 125–145 (VLAL…GVAF), 149–169 (FGFY…MMWL), 178–198 (VGNG…PRAI), 212–232 (IFAL…VVFI), 269–289 (VIPA…GSWF), 312–332 (NILL…ALMF), 363–383 (GVLT…CLLP), and 385–405 (FLVV…LIVV).

Belongs to the SecY/SEC61-alpha family. Component of the Sec protein translocase complex. Heterotrimer consisting of SecY, SecE and SecG subunits. The heterotrimers can form oligomers, although 1 heterotrimer is thought to be able to translocate proteins. Interacts with the ribosome. Interacts with SecDF, and other proteins may be involved. Interacts with SecA.

It is found in the cell inner membrane. Functionally, the central subunit of the protein translocation channel SecYEG. Consists of two halves formed by TMs 1-5 and 6-10. These two domains form a lateral gate at the front which open onto the bilayer between TMs 2 and 7, and are clamped together by SecE at the back. The channel is closed by both a pore ring composed of hydrophobic SecY resides and a short helix (helix 2A) on the extracellular side of the membrane which forms a plug. The plug probably moves laterally to allow the channel to open. The ring and the pore may move independently. The sequence is that of Protein translocase subunit SecY from Pseudomonas aeruginosa (strain ATCC 15692 / DSM 22644 / CIP 104116 / JCM 14847 / LMG 12228 / 1C / PRS 101 / PAO1).